A 469-amino-acid polypeptide reads, in one-letter code: Citrate synthase, mitochondrial (469 aa).

The N-terminal 30 residues, 1 to 30 (MSFLTVSRLAPKLLNSKNATYFLVAARNAS), are a transit peptide targeting the mitochondrion. Catalysis depends on residues H304 and H350. Oxaloacetate is bound at residue R359. Residue D405 is part of the active site. Oxaloacetate-binding residues include R431 and R451.

This sequence belongs to the citrate synthase family. In terms of assembly, homodimer.

It localises to the mitochondrion matrix. The catalysed reaction is oxaloacetate + acetyl-CoA + H2O = citrate + CoA + H(+). It participates in carbohydrate metabolism; tricarboxylic acid cycle; isocitrate from oxaloacetate: step 1/2. Functionally, key enzyme of the Krebs tricarboxylic acid cycle which catalyzes the synthesis of citrate from acetyl coenzyme A and oxaloacetate. The protein is Citrate synthase, mitochondrial (cs) of Kajikia audax (Striped marlin).